Consider the following 100-residue polypeptide: Small ribosomal subunit protein bS18 (100 aa).

The segment at 1-23 (MTFIRKPAGQAKPQKYSTDAYGR) is disordered.

It belongs to the bacterial ribosomal protein bS18 family. In terms of assembly, part of the 30S ribosomal subunit. Forms a tight heterodimer with protein bS6.

Binds as a heterodimer with protein bS6 to the central domain of the 16S rRNA, where it helps stabilize the platform of the 30S subunit. The chain is Small ribosomal subunit protein bS18 from Endomicrobium trichonymphae.